The chain runs to 124 residues: FK506-binding protein 1 (124 aa).

In terms of domain architecture, PPIase FKBP-type spans 23–122; it reads GDTVTIHYDG…VFEVELLGVN (100 aa).

It belongs to the FKBP-type PPIase family. FKBP1 subfamily.

It localises to the cytoplasm. It carries out the reaction [protein]-peptidylproline (omega=180) = [protein]-peptidylproline (omega=0). Its activity is regulated as follows. Inhibited by rapamycin. Functionally, PPIases accelerate the folding of proteins. It catalyzes the cis-trans isomerization of proline imidic peptide bonds in oligopeptides. The protein is FK506-binding protein 1 (RBP1) of Candida albicans (strain SC5314 / ATCC MYA-2876) (Yeast).